We begin with the raw amino-acid sequence, 622 residues long: Low affinity potassium transport system protein Kup (622 aa).

12 helical membrane-spanning segments follow: residues 9-29 (LSAV…TSPL), 46-66 (PDVV…VVSV), 101-121 (ILVV…VITP), 137-157 (PALD…LFVI), 165-185 (VGKL…LLGL), 213-233 (VSFF…ALYA), 247-267 (WFTV…ALLL), 276-296 (PFFL…ATLA), 337-357 (IYIP…IIGF), 363-383 (LAAA…ILFC), 395-415 (FLVV…FSAN), and 416-436 (VLKL…MFII).

The protein belongs to the HAK/KUP transporter (TC 2.A.72) family.

The protein localises to the cell inner membrane. It catalyses the reaction K(+)(in) + H(+)(in) = K(+)(out) + H(+)(out). Its function is as follows. Responsible for the low-affinity transport of potassium into the cell. Likely operates as a K(+):H(+) symporter. This is Low affinity potassium transport system protein Kup from Yersinia pestis (strain Pestoides F).